The primary structure comprises 549 residues: MGTDITATSEWQALARHRDEIGETNLRQLFADDAARGLRFAVTVGGLYIDYSKHRVTAETLNLLVDVARAAGLETKRDAMFSGEHINTSEDRAVLHTALRLPRDAALTVDGQDVVADVHEVLDRMGDFTDRLRSGDWLGATGERITTVVNIGIGGSDLGPVMVDQALRHYADAGISARFVSNVDPADLVAKLAGLNPATTLFVIASKTFSTLETLTNATAARRWLIEALGEDAVSKHFVAVSTNAKLVAEFGIDTDNMFGFWDWVGGRYSVDSAIGLSVMAVIGRERFAEFLAGFHLIDEHFRTAPLEANAPVLLGLIGLWYNNFFGAETRAVLPYSNDLARFAAYLQQLTMESNGKSVQADGTPVSTATGEIFWGEPGTNGQHAFYQLLHQGTRLVPADFIGFSEPTDDLPTADGTGSMHDLLMSNFFAQTQVLAFGKTADEISAEGTSPDVVPHKVMPGNRPTTSILATKLTPSVVGQLIALYEHQVFVEGVIWGIDSFDQWGVELGKTQAKALLPVLTDAEPPAAQSDSSTDALVRRYRSERGRTA.

The active-site Proton donor is E353. Catalysis depends on residues H384 and K510. The tract at residues 523 to 549 (AEPPAAQSDSSTDALVRRYRSERGRTA) is disordered. Positions 537–549 (LVRRYRSERGRTA) are enriched in basic and acidic residues.

It belongs to the GPI family.

The protein localises to the cytoplasm. The catalysed reaction is alpha-D-glucose 6-phosphate = beta-D-fructose 6-phosphate. The protein operates within carbohydrate biosynthesis; gluconeogenesis. Its pathway is carbohydrate degradation; glycolysis; D-glyceraldehyde 3-phosphate and glycerone phosphate from D-glucose: step 2/4. Catalyzes the reversible isomerization of glucose-6-phosphate to fructose-6-phosphate. This chain is Glucose-6-phosphate isomerase, found in Mycolicibacterium gilvum (strain PYR-GCK) (Mycobacterium gilvum (strain PYR-GCK)).